The sequence spans 337 residues: Lipopolysaccharide 1,3-galactosyltransferase (337 aa).

UDP-binding positions include 33-38 and 130-131; these read GIDKNF and DA. Aspartate 130 and aspartate 132 together coordinate Mg(2+). 2 short sequence motifs (DXD) span residues 130 to 132 and 219 to 221; these read DAD and DQD. Histidine 264 is a Mg(2+) binding site. Position 264–270 (264–270) interacts with UDP; it reads HYIGPTK.

The protein belongs to the glycosyltransferase 8 family. Mg(2+) is required as a cofactor.

The enzyme catalyses UDP-alpha-D-galactose + [lipopolysaccharide] = UDP + 3-alpha-D-galactosyl-[lipopolysaccharide].. It participates in bacterial outer membrane biogenesis; LPS core biosynthesis. Its activity is regulated as follows. Inhibited in a competitive manner by closely related nonsubstrate lipopolysaccharides. In terms of biological role, galactosyltransferase involved in the biosynthesis of the core oligosaccharide region of lipopolysaccharide (LPS). Catalyzes the addition of an alpha l,3-linked galactose (galactose I) to the first outer-core glucose (glucose I). Cannot use UDP-glucose. Activity probably does not require the branched galactose added by WaaB, but it is higher in the presence of this branched galactose. This chain is Lipopolysaccharide 1,3-galactosyltransferase, found in Salmonella typhimurium (strain LT2 / SGSC1412 / ATCC 700720).